A 460-amino-acid chain; its full sequence is C4-dicarboxylate transport protein (460 aa).

The next 9 helical transmembrane spans lie at 20-40, 56-76, 88-108, 153-173, 200-220, 234-254, 301-321, 342-362, and 364-384; these read SLYF…HFYP, LIKM…IAGM, YALL…LIVV, IVGA…VIFG, IINM…AFTI, LMIC…GAIC, VVGL…SIYL, ITLL…TGSG, and IVLA…LALI. The tract at residues 438-460 is disordered; sequence PEDDLGVAEGPTPANAVNTTKTV.

This sequence belongs to the dicarboxylate/amino acid:cation symporter (DAACS) (TC 2.A.23) family.

Its subcellular location is the cell inner membrane. Responsible for the transport of dicarboxylates such as succinate, fumarate, and malate from the periplasm across the membrane. The polypeptide is C4-dicarboxylate transport protein (Pseudomonas savastanoi pv. phaseolicola (strain 1448A / Race 6) (Pseudomonas syringae pv. phaseolicola (strain 1448A / Race 6))).